We begin with the raw amino-acid sequence, 327 residues long: NADPH-dependent aldose reductase GRE3 (327 aa).

Tyrosine 49 (proton donor) is an active-site residue. Histidine 111 contributes to the substrate binding site. 219–286 (SSFGPQSFIE…SSKKERLLGN (68 aa)) provides a ligand contact to NADP(+).

The protein belongs to the aldo/keto reductase family. As to quaternary structure, monomer.

The protein localises to the cytoplasm. Its subcellular location is the nucleus. It catalyses the reaction an alditol + NAD(+) = an aldose + NADH + H(+). It carries out the reaction an alditol + NADP(+) = an aldose + NADPH + H(+). Aldose reductase with a broad substrate specificity. Reduces the cytotoxic compound methylglyoxal (MG) to acetol and (R)-lactaldehyde under stress conditions. MG is synthesized via a bypath of glycolysis from dihydroxyacetone phosphate and is believed to play a role in cell cycle regulation and stress adaptation. In pentose-fermenting yeasts, aldose reductase catalyzes the reduction of xylose into xylitol. The purified enzyme catalyzes this reaction, but the inability of S.cerevisiae to grow on xylose as sole carbon source indicates that the physiological function is more likely methylglyoxal reduction. The protein is NADPH-dependent aldose reductase GRE3 of Saccharomyces cerevisiae (strain ATCC 204508 / S288c) (Baker's yeast).